The sequence spans 799 residues: Potassium transporter 21 (799 aa).

Topologically, residues 1–56 are cytoplasmic; sequence MDPGVEKKKQQMELVDVESGGLPVERQDSLFREAVRAEHAGAAHWDEQDSWGRTMS. The helical transmembrane segment at 57-77 threads the bilayer; sequence LAFQCVGILYGDIGTSSLYVY. Residues 78 to 93 lie on the Extracellular side of the membrane; it reads SSTFEHGIGHPDDVVG. A helical membrane pass occupies residues 94-114; sequence VLSLIVYSFMLFTVIKIVFVA. The Cytoplasmic portion of the chain corresponds to 115–181; the sequence is LHANDHGDGG…QLLEASKAAK (67 aa). A helical transmembrane segment spans residues 182 to 202; that stretch reads ISLFLLTILAIAMVISDAVLT. Residues 203-219 lie on the Extracellular side of the membrane; that stretch reads PPISVLSAVGGLREKVP. A helical membrane pass occupies residues 220-240; it reads HLTTDQIVWITVAILVVLFAI. Residues 241–251 are Cytoplasmic-facing; it reads QRYGTDKVGYS. Residues 252 to 272 form a helical membrane-spanning segment; the sequence is FAPIILLWLLLIGATGLYNLI. The Extracellular segment spans residues 273–301; sequence KHDISVLRAFNPKYIIDYFRRNKKEGWVS. The chain crosses the membrane as a helical span at residues 302 to 322; the sequence is LGSILLCFTGSEALFANLGYF. Topologically, residues 323-328 are cytoplasmic; the sequence is SIRSIQ. A helical transmembrane segment spans residues 329–349; the sequence is LSFSFALLPSVLLTYIGQAAF. Residues 350-362 lie on the Extracellular side of the membrane; it reads LSKNPKNVANTFF. A helical transmembrane segment spans residues 363 to 383; it reads AATPISLFWPTFIMAIAASII. The Cytoplasmic segment spans residues 384-420; the sequence is GSQAMISCAFATVSHLQSLSCFPRVKILHTSKRFPGQ. A helical membrane pass occupies residues 421-441; it reads LYIPGVNFLLCVAACVVTVSF. At 442–452 the chain is on the extracellular side; that stretch reads KTTVIIGKAHE. Residues 453-473 traverse the membrane as a helical segment; it reads ICVILVMIITTLLMTIVMLLV. The Cytoplasmic portion of the chain corresponds to 474-475; the sequence is WK. The helical transmembrane segment at 476-496 threads the bilayer; it reads INILWVALFFITFTSTEAVYL. Topologically, residues 497–508 are extracellular; it reads SSVLYKFTHGPY. A helical membrane pass occupies residues 509-529; sequence VPVAMSVVLMVVMIVWHYVHV. Over 530–799 the chain is Cytoplasmic; the sequence is KRYKYELEHT…LLKVGISYEI (270 aa).

This sequence belongs to the HAK/KUP transporter (TC 2.A.72.3) family.

The protein localises to the membrane. In terms of biological role, high-affinity potassium transporter. The sequence is that of Potassium transporter 21 (HAK21) from Oryza sativa subsp. japonica (Rice).